The primary structure comprises 118 residues: UPF0342 protein BC_0880 (118 aa).

It belongs to the UPF0342 family.

In Bacillus cereus (strain ATCC 14579 / DSM 31 / CCUG 7414 / JCM 2152 / NBRC 15305 / NCIMB 9373 / NCTC 2599 / NRRL B-3711), this protein is UPF0342 protein BC_0880.